The primary structure comprises 1076 residues: Structural maintenance of chromosomes protein 5 (1076 aa).

49-56 (GHNGSGKS) lines the ATP pocket. Residues 190–415 (STSIEDKCTT…KRDEEQNSQL (226 aa)) are a coiled coil. Residues 375-410 (EQKYSTAERDSRQEEDAIQKKSYEMRQLENKKRDEE) show a composition bias toward basic and acidic residues. The interval 375 to 420 (EQKYSTAERDSRQEEDAIQKKSYEMRQLENKKRDEEQNSQLNRQDR) is disordered. A flexible hinge region spans residues 416-617 (NRQDRYRVLQ…ANTWRDQFFK (202 aa)). Coiled coils occupy residues 627-713 (NSIL…EKKA) and 749-786 (KSRV…ALNH).

The protein belongs to the SMC family. SMC5 subfamily. As to quaternary structure, interacts with smc-6. In terms of tissue distribution, expressed in the germline (at protein level).

The protein localises to the nucleus. It is found in the chromosome. Functionally, core component of the smc-5/smc-6 complex. Functions in DNA double strand break repair by promoting sister-chromatid homologous recombination during meiosis. Acts in a DNA repair pathway for removal of ionizing radiation- and ultraviolet (UV) radiation-induced DNA lesions that is distinct from classical nucleotide excision repair and the translesion synthesis pathway. Also involved in the recovery of stalled replication forks. In Caenorhabditis elegans, this protein is Structural maintenance of chromosomes protein 5.